The following is a 1506-amino-acid chain: ABC transporter C family member 9 (1506 aa).

A run of 11 helical transmembrane segments spans residues Met37–Val57, Ile84–Phe104, Val116–Val136, Met150–Ile170, Phe179–Ile199, Ala315–Ile335, Leu350–Thr370, Phe427–Ile447, Leu452–Pro472, Phe541–Met561, and Ala567–Leu587. The 283-residue stretch at Ala314–Gln596 folds into the ABC transmembrane type-1 1 domain. Positions Val630–Ala853 constitute an ABC transporter 1 domain. ATP is bound at residue Gly665–Ser672. Helical transmembrane passes span Leu934 to Trp956, Ile976 to Ile996, Met1048 to Val1068, Leu1167 to Ile1187, and Ile1191 to Trp1211. The region spanning Val936–Asn1218 is the ABC transmembrane type-1 2 domain. Positions Phe1257–Lys1489 constitute an ABC transporter 2 domain. An ATP-binding site is contributed by Gly1289–Ser1296.

Belongs to the ABC transporter superfamily. ABCC family. Conjugate transporter (TC 3.A.1.208) subfamily. As to expression, ubiquitous.

The protein resides in the membrane. It catalyses the reaction ATP + H2O + xenobioticSide 1 = ADP + phosphate + xenobioticSide 2.. Pump for glutathione S-conjugates. The protein is ABC transporter C family member 9 (ABCC9) of Arabidopsis thaliana (Mouse-ear cress).